Consider the following 360-residue polypeptide: Secreted LysM effector LysM2 (360 aa).

A signal peptide spans 1-21 (MKISSLSILPLLGVVSAGIHG). The 49-residue stretch at 37–85 (TWYLDLVDDSYTCENIESQWDLSHEAFVAWNPGVKKDCSGLKVGLSVCV) folds into the LysM 1 domain. Residues 94 to 113 (ATPTSEASTSSETSSASPTA) are compositionally biased toward low complexity. A disordered region spans residues 94–125 (ATPTSEASTSSETSSASPTASRPPLPSPTQDG). Asparagine 129 is a glycosylation site (N-linked (GlcNAc...) asparagine). A LysM 2 domain is found at 132 to 179 (KFHQAVSGDTCSKIISRYKPITLDQFIEWNPALEKDCSGLWSGYYYCV). A glycan (N-linked (GlcNAc...) asparagine) is linked at asparagine 204. 2 consecutive LysM domains span residues 225–272 (RWHK…YYCI) and 311–357 (KWHQ…YVCV).

Belongs to the secreted LysM effector family.

The protein resides in the secreted. It localises to the cell wall. Its function is as follows. Secreted effector that binds two substrates, chitin and N-linked oligosaccharides associated with human skin glycoproteins. Could provide the pathogen with three important functions including shielding host cell wall chitin from the human immune system, shielding the pathogen's glycoproteins from host degradation and immune surveillance, and helping facilitate pathogen adhesion to human skin. In Trichophyton rubrum (strain ATCC MYA-4607 / CBS 118892) (Athlete's foot fungus), this protein is Secreted LysM effector LysM2.